We begin with the raw amino-acid sequence, 492 residues long: Catalase (492 aa).

Residues His-65 and Asn-138 contribute to the active site. Tyr-348 is a binding site for heme.

It belongs to the catalase family. As to quaternary structure, homotetramer. Requires heme as cofactor.

The protein localises to the cytoplasm. Its subcellular location is the cytosol. It is found in the peroxisome matrix. The enzyme catalyses 2 H2O2 = O2 + 2 H2O. Catalyzes the degradation of hydrogen peroxide (H(2)O(2)) generated by peroxisomal oxidases to water and oxygen, thereby protecting cells from the toxic effects of hydrogen peroxide. The chain is Catalase from Ipomoea batatas (Sweet potato).